The primary structure comprises 480 residues: Methylenetetrahydrofolate--tRNA-(uracil-5-)-methyltransferase TrmFO (480 aa).

Residue 15–20 (GGGLAG) coordinates FAD.

This sequence belongs to the MnmG family. TrmFO subfamily. The cofactor is FAD.

It is found in the cytoplasm. It catalyses the reaction uridine(54) in tRNA + (6R)-5,10-methylene-5,6,7,8-tetrahydrofolate + NADH + H(+) = 5-methyluridine(54) in tRNA + (6S)-5,6,7,8-tetrahydrofolate + NAD(+). It carries out the reaction uridine(54) in tRNA + (6R)-5,10-methylene-5,6,7,8-tetrahydrofolate + NADPH + H(+) = 5-methyluridine(54) in tRNA + (6S)-5,6,7,8-tetrahydrofolate + NADP(+). In terms of biological role, catalyzes the folate-dependent formation of 5-methyl-uridine at position 54 (M-5-U54) in all tRNAs. The sequence is that of Methylenetetrahydrofolate--tRNA-(uracil-5-)-methyltransferase TrmFO from Sinorhizobium medicae (strain WSM419) (Ensifer medicae).